We begin with the raw amino-acid sequence, 469 residues long: MSNITKLFVKSTKNFSRSFSRKTVDPSYLKISPETKITTLSNGIRVATEQTYGEVASVGVWVDSGSVYETDKNNGVAHFLEHMIFKGTAKRPTPQSIETEIENMGGSLNAFTSREHSAYYMKVLKDNVPNAVDILSDILQNSKFETSLIEQERDTILSENDYIQSKEDEVVFDQLHAAAFQGSALGRTILGPVENIKSITREQIQEFINENYTGDRLVISAAGAVNHEQLVEQVKEKFANVKMSQVSKDVKRAAITNDFIGSELRVRDDEQPLIHFAVAVRALPWTDPDYFVLELIQTMIGNWNRGIAAGKNIASNLGEIVATEDLAESYSTFFTCYQDTGLFGNYGVCQPERVDDLVAEMLKEWQRIATSCNKNEVERNKQKLLATTLMQYDGTSKVCEGIGRQILTLGRRLSPFEVYTRINEITVADVQRVASTLLRDVSPAVTAIGPIANYPDYNFVKGWTYWNRL.

His78 contributes to the Zn(2+) binding site. Glu81 acts as the Proton acceptor in catalysis. His82 and Glu159 together coordinate Zn(2+).

This sequence belongs to the peptidase M16 family. As to quaternary structure, heterodimer of alpha and beta subunits, forming the mitochondrial processing protease (MPP) in which subunit alpha is involved in substrate recognition and binding and subunit beta is the catalytic subunit. mppB is probably also part of the cytochrome bc1 complex as a core I protein in the mitochondrial inner membrane. Zn(2+) is required as a cofactor.

The protein localises to the mitochondrion inner membrane. It is found in the mitochondrion matrix. It catalyses the reaction Release of N-terminal transit peptides from precursor proteins imported into the mitochondrion, typically with Arg in position P2.. With respect to regulation, binding to alpha subunit is required for catalytic activity. Functionally, catalytic subunit of the essential mitochondrial processing protease (MPP), which cleaves the mitochondrial sequence off newly imported precursors proteins. Preferentially, cleaves after an arginine at position P2. Plays an essential role in mitochondrial biogenesis. In Dictyostelium discoideum (Social amoeba), this protein is Mitochondrial-processing peptidase subunit beta (mppB).